Reading from the N-terminus, the 342-residue chain is Polygalacturonase inhibitor 1 (342 aa).

The first 29 residues, Met1–Ser29, serve as a signal peptide directing secretion. Intrachain disulfides connect Cys32-Cys62 and Cys63-Cys72. N-linked (GlcNAc...) asparagine glycosylation is present at Asn64. 10 LRR repeats span residues Asn82 to Leu107, Asn108 to Leu132, His133 to Leu156, Val157 to Leu180, Gly181 to Phe205, Thr206 to Leu228, Ala229 to Thr252, Lys253 to Leu275, Asn276 to Leu299, and Gln300 to Leu319. N-linked (GlcNAc...) asparagine glycosylation is present at Asn141. A glycan (N-linked (GlcNAc...) asparagine) is linked at Asn303. Cystine bridges form between Cys310–Cys332 and Cys334–Cys341.

This sequence belongs to the polygalacturonase-inhibiting protein family.

The protein resides in the secreted. It localises to the cell wall. The protein localises to the membrane. In terms of biological role, inhibitor of fungal polygalacturonase. It is an important factor for plant resistance to phytopathogenic fungi. Substrate preference is polygalacturonase (PG) from A.niger &gt;&gt; PG of F.oxysporum, A.solani or B.cinerea. Not active on PG from F.moniliforme. This Phaseolus vulgaris (Kidney bean) protein is Polygalacturonase inhibitor 1 (PGIP1).